Reading from the N-terminus, the 181-residue chain is Swi1-interacting protein swi3 (181 aa).

The segment at M1–K47 is disordered. Residues G9–E27 are compositionally biased toward basic and acidic residues. Acidic residues predominate over residues E28 to P39.

Belongs to the CSM3 family. Fork protection complex (FPC) consisting of swi1 and swi3 interacts with mat1 cis-acting sequences and mat1-proximal polar-terminator of replication (RTS1).

It is found in the nucleus. Forms a fork protection complex (FPC) with swi1. FPC coordinates leading and lagging strand synthesis and moves with the replication fork. It is required for programmed fork-pausing which is necessary for mating-type switching. FPC stabilizes replication forks in a configuration that is recognized by replication checkpoint sensors. It is involved in termination at the mat1-proximal polar-terminator of replication (RTS1) and also required for activation of the Rad53-like checkpoint kinase cds1. The chain is Swi1-interacting protein swi3 (swi3) from Schizosaccharomyces pombe (strain 972 / ATCC 24843) (Fission yeast).